Reading from the N-terminus, the 556-residue chain is 2-succinyl-5-enolpyruvyl-6-hydroxy-3-cyclohexene-1-carboxylate synthase (556 aa).

It belongs to the TPP enzyme family. MenD subfamily. Homodimer. Mg(2+) is required as a cofactor. Requires Mn(2+) as cofactor. Thiamine diphosphate serves as cofactor.

It carries out the reaction isochorismate + 2-oxoglutarate + H(+) = 5-enolpyruvoyl-6-hydroxy-2-succinyl-cyclohex-3-ene-1-carboxylate + CO2. It functions in the pathway quinol/quinone metabolism; 1,4-dihydroxy-2-naphthoate biosynthesis; 1,4-dihydroxy-2-naphthoate from chorismate: step 2/7. Its pathway is quinol/quinone metabolism; menaquinone biosynthesis. In terms of biological role, catalyzes the thiamine diphosphate-dependent decarboxylation of 2-oxoglutarate and the subsequent addition of the resulting succinic semialdehyde-thiamine pyrophosphate anion to isochorismate to yield 2-succinyl-5-enolpyruvyl-6-hydroxy-3-cyclohexene-1-carboxylate (SEPHCHC). This chain is 2-succinyl-5-enolpyruvyl-6-hydroxy-3-cyclohexene-1-carboxylate synthase, found in Salmonella paratyphi C (strain RKS4594).